A 311-amino-acid polypeptide reads, in one-letter code: Malate dehydrogenase (311 aa).

NAD(+)-binding positions include G7–G13 and D34. The substrate site is built by R81 and R87. NAD(+)-binding positions include N94 and I117–N119. Substrate is bound by residues N119 and R153. H177 functions as the Proton acceptor in the catalytic mechanism. M227 contacts NAD(+).

It belongs to the LDH/MDH superfamily. MDH type 1 family. In terms of assembly, homodimer.

The catalysed reaction is (S)-malate + NAD(+) = oxaloacetate + NADH + H(+). In terms of biological role, catalyzes the reversible oxidation of malate to oxaloacetate. The protein is Malate dehydrogenase of Shewanella pealeana (strain ATCC 700345 / ANG-SQ1).